The following is a 251-amino-acid chain: Triosephosphate isomerase (251 aa).

Substrate is bound at residue 9-11 (NWK). Histidine 93 acts as the Electrophile in catalysis. The Proton acceptor role is filled by glutamate 163. Substrate-binding positions include glycine 169, serine 209, and 230-231 (GG).

Belongs to the triosephosphate isomerase family. As to quaternary structure, homodimer.

It localises to the cytoplasm. It catalyses the reaction D-glyceraldehyde 3-phosphate = dihydroxyacetone phosphate. It functions in the pathway carbohydrate biosynthesis; gluconeogenesis. The protein operates within carbohydrate degradation; glycolysis; D-glyceraldehyde 3-phosphate from glycerone phosphate: step 1/1. In terms of biological role, involved in the gluconeogenesis. Catalyzes stereospecifically the conversion of dihydroxyacetone phosphate (DHAP) to D-glyceraldehyde-3-phosphate (G3P). The polypeptide is Triosephosphate isomerase (Ruegeria pomeroyi (strain ATCC 700808 / DSM 15171 / DSS-3) (Silicibacter pomeroyi)).